A 131-amino-acid chain; its full sequence is Holo-[acyl-carrier-protein] synthase (131 aa).

2 residues coordinate Mg(2+): D8 and E57.

This sequence belongs to the P-Pant transferase superfamily. AcpS family. Mg(2+) is required as a cofactor.

The protein resides in the cytoplasm. It carries out the reaction apo-[ACP] + CoA = holo-[ACP] + adenosine 3',5'-bisphosphate + H(+). Transfers the 4'-phosphopantetheine moiety from coenzyme A to a Ser of acyl-carrier-protein. This chain is Holo-[acyl-carrier-protein] synthase, found in Desulforudis audaxviator (strain MP104C).